The following is a 273-amino-acid chain: MAIHLYKTSTPSTRNGAVDSQVKSNPRNNLIHGQHHCGKGRNARGIITAGHRGGGHKRLYRKIDFRRNEKDTSGRIVTIEYDPNRNAYICLIHYGDGEKRYILHPRGAIIGDTIVSGTEVPISMGNALPLTDMPLGTAIHNIEITLGKGGQLARAAGAVAKLIAKEGKSATLRLPSGEVRLISKNCSATVGQVGNVGVNQKSLGRAGSKCWLGKRPVVRGVVMNPVDHPHGGGEGRAPIGRKKPTTPWGYPALGRRSRKRNKYSDSLILRRRK.

Disordered regions lie at residues 1–27 (MAIHLYKTSTPSTRNGAVDSQVKSNPR) and 224–273 (NPVD…RRRK).

Belongs to the universal ribosomal protein uL2 family. In terms of assembly, part of the 50S ribosomal subunit.

The protein resides in the plastid. It localises to the chloroplast. This is Large ribosomal subunit protein uL2cy (rpl2-B) from Liriodendron tulipifera (Tuliptree).